The chain runs to 887 residues: Protein PTHB1 (887 aa).

The seven-bladed beta-propeller stretch occupies residues 1–407 (MSLFKARDWW…SQGVWPMTER (407 aa)). An interaction with LZTL1 region spans residues 685 to 765 (KDKTPAPLQH…FLPLQEDTQE (81 aa)). The segment at 850–887 (DLEERSVEQDSTELFTNHRHLTAETPRPEVSPLQGVSE) is disordered.

Part of BBSome complex, that contains BBS1, BBS2, BBS4, BBS5, BBS7, BBS8/TTC8, BBS9 and BBIP10. Interacts with LZTL1; the interaction mediates the association of LZTL1 with the BBsome complex and regulates BBSome ciliary trafficking. In terms of tissue distribution, widely expressed. Expressed in adult heart, skeletal muscle, lung, liver, kidney, placenta and brain, and in fetal kidney, lung, liver and brain.

The protein localises to the cytoplasm. It is found in the cytoskeleton. Its subcellular location is the microtubule organizing center. The protein resides in the centrosome. It localises to the cell projection. The protein localises to the cilium membrane. It is found in the centriolar satellite. Its function is as follows. The BBSome complex is thought to function as a coat complex required for sorting of specific membrane proteins to the primary cilia. The BBSome complex is required for ciliogenesis but is dispensable for centriolar satellite function. This ciliogenic function is mediated in part by the Rab8 GDP/GTP exchange factor, which localizes to the basal body and contacts the BBSome. Rab8(GTP) enters the primary cilium and promotes extension of the ciliary membrane. Firstly the BBSome associates with the ciliary membrane and binds to RAB3IP/Rabin8, the guanosyl exchange factor (GEF) for Rab8 and then the Rab8-GTP localizes to the cilium and promotes docking and fusion of carrier vesicles to the base of the ciliary membrane. Required for proper BBSome complex assembly and its ciliary localization. This is Protein PTHB1 (BBS9) from Homo sapiens (Human).